The primary structure comprises 305 residues: Oxygen-dependent coproporphyrinogen-III oxidase (305 aa).

A substrate-binding site is contributed by S93. 2 residues coordinate a divalent metal cation: H97 and H107. The Proton donor role is filled by H107. 109–111 (NVR) lines the substrate pocket. 2 residues coordinate a divalent metal cation: H146 and H176. The interval 241 to 276 (YVEFNLVYDRGTLFGLQSGGRTESILMSLPPQVRWG) is important for dimerization. Substrate is bound at residue 259 to 261 (GGR).

This sequence belongs to the aerobic coproporphyrinogen-III oxidase family. As to quaternary structure, homodimer. It depends on a divalent metal cation as a cofactor.

The protein resides in the cytoplasm. The catalysed reaction is coproporphyrinogen III + O2 + 2 H(+) = protoporphyrinogen IX + 2 CO2 + 2 H2O. Its pathway is porphyrin-containing compound metabolism; protoporphyrin-IX biosynthesis; protoporphyrinogen-IX from coproporphyrinogen-III (O2 route): step 1/1. Involved in the heme biosynthesis. Catalyzes the aerobic oxidative decarboxylation of propionate groups of rings A and B of coproporphyrinogen-III to yield the vinyl groups in protoporphyrinogen-IX. This is Oxygen-dependent coproporphyrinogen-III oxidase from Pseudomonas fluorescens (strain ATCC BAA-477 / NRRL B-23932 / Pf-5).